Here is a 338-residue protein sequence, read N- to C-terminus: Anthranilate phosphoribosyltransferase (338 aa).

5-phospho-alpha-D-ribose 1-diphosphate contacts are provided by residues G80, 83–84 (GD), T88, 90–93 (NIST), 108–116 (KHGNRSVSS), and S120. G80 contacts anthranilate. S92 contacts Mg(2+). N111 lines the anthranilate pocket. R166 provides a ligand contact to anthranilate. Mg(2+)-binding residues include D225 and E226.

It belongs to the anthranilate phosphoribosyltransferase family. As to quaternary structure, homodimer. Mg(2+) is required as a cofactor.

It carries out the reaction N-(5-phospho-beta-D-ribosyl)anthranilate + diphosphate = 5-phospho-alpha-D-ribose 1-diphosphate + anthranilate. Its pathway is amino-acid biosynthesis; L-tryptophan biosynthesis; L-tryptophan from chorismate: step 2/5. Functionally, catalyzes the transfer of the phosphoribosyl group of 5-phosphorylribose-1-pyrophosphate (PRPP) to anthranilate to yield N-(5'-phosphoribosyl)-anthranilate (PRA). This Desulfatibacillum aliphaticivorans protein is Anthranilate phosphoribosyltransferase.